The following is a 274-amino-acid chain: Shikimate dehydrogenase (NADP(+)) (274 aa).

Shikimate contacts are provided by residues 14–16 (SKS) and T61. The active-site Proton acceptor is the K65. Residue E77 coordinates NADP(+). Residues N86 and D102 each coordinate shikimate. NADP(+) is bound by residues 126–130 (GAGGA), 149–154 (NRTLEK), and M212. Residue Y214 participates in shikimate binding. Residue G237 coordinates NADP(+).

The protein belongs to the shikimate dehydrogenase family. In terms of assembly, homodimer.

It catalyses the reaction shikimate + NADP(+) = 3-dehydroshikimate + NADPH + H(+). The protein operates within metabolic intermediate biosynthesis; chorismate biosynthesis; chorismate from D-erythrose 4-phosphate and phosphoenolpyruvate: step 4/7. In terms of biological role, involved in the biosynthesis of the chorismate, which leads to the biosynthesis of aromatic amino acids. Catalyzes the reversible NADPH linked reduction of 3-dehydroshikimate (DHSA) to yield shikimate (SA). The sequence is that of Shikimate dehydrogenase (NADP(+)) from Actinobacillus pleuropneumoniae serotype 5b (strain L20).